The sequence spans 282 residues: BURP domain-containing protein BNM2A (282 aa).

The N-terminal stretch at 1 to 26 is a signal peptide; that stretch reads MASLRFSVTFPALLSLLLLSLWVVEA. A BURP domain is found at 60–282; it reads FFKISDLKLG…PLDNIVWVSK (223 aa).

Expressed in the radicle and cotyledon of germinating seeds 2 days post-imbibition (DPI), in stems and roots of 30-DPI young plants and in floral buds, but not in fully open flowers or leaves. Expressed in the embryo and seed coat tissues of developing seeds. The protein accumulates only in seeds and only long after transcript accumulation becomes evident.

The protein localises to the protein storage vacuole. This is BURP domain-containing protein BNM2A from Brassica napus (Rape).